A 162-amino-acid polypeptide reads, in one-letter code: Phosphopantetheine adenylyltransferase (162 aa).

Position 14 (Thr14) interacts with substrate. ATP contacts are provided by residues 14-15 (TF) and His22. Substrate contacts are provided by Lys46, Leu78, and Arg92. Residues 93-95 (GLR), Glu103, and 128-134 (HSFISSS) each bind ATP.

It belongs to the bacterial CoaD family. In terms of assembly, homohexamer. The cofactor is Mg(2+).

It localises to the cytoplasm. The enzyme catalyses (R)-4'-phosphopantetheine + ATP + H(+) = 3'-dephospho-CoA + diphosphate. Its pathway is cofactor biosynthesis; coenzyme A biosynthesis; CoA from (R)-pantothenate: step 4/5. In terms of biological role, reversibly transfers an adenylyl group from ATP to 4'-phosphopantetheine, yielding dephospho-CoA (dPCoA) and pyrophosphate. This chain is Phosphopantetheine adenylyltransferase, found in Xylella fastidiosa (strain M23).